Here is a 127-residue protein sequence, read N- to C-terminus: Fluoride-specific ion channel FluC (127 aa).

Transmembrane regions (helical) follow at residues 4–24 (LLLA…LLSM), 35–55 (LGTL…FAWF), 71–91 (TGFC…VFLL), and 103–123 (VFVN…LFSA). Residues Gly75 and Thr78 each coordinate Na(+).

It belongs to the fluoride channel Fluc/FEX (TC 1.A.43) family.

Its subcellular location is the cell inner membrane. It carries out the reaction fluoride(in) = fluoride(out). Its activity is regulated as follows. Na(+) is not transported, but it plays an essential structural role and its presence is essential for fluoride channel function. Functionally, fluoride-specific ion channel. Important for reducing fluoride concentration in the cell, thus reducing its toxicity. This is Fluoride-specific ion channel FluC from Escherichia coli O8 (strain IAI1).